The following is a 68-amino-acid chain: MKSKDYVQELNGLTTDKLLDREKELKEQLFNLRFQLATGQLENTASLKQVRKDIARVKTVLRQQELNK.

Belongs to the universal ribosomal protein uL29 family.

This chain is Large ribosomal subunit protein uL29, found in Limosilactobacillus reuteri (strain DSM 20016) (Lactobacillus reuteri).